Here is a 332-residue protein sequence, read N- to C-terminus: Adenosine deaminase (332 aa).

Residues H12 and H14 each coordinate Zn(2+). Residues H14, D16, and G170 each coordinate substrate. H197 provides a ligand contact to Zn(2+). E200 (proton donor) is an active-site residue. D278 serves as a coordination point for Zn(2+). D279 contributes to the substrate binding site.

It belongs to the metallo-dependent hydrolases superfamily. Adenosine and AMP deaminases family. Adenosine deaminase subfamily. Zn(2+) is required as a cofactor.

The catalysed reaction is adenosine + H2O + H(+) = inosine + NH4(+). The enzyme catalyses 2'-deoxyadenosine + H2O + H(+) = 2'-deoxyinosine + NH4(+). Catalyzes the hydrolytic deamination of adenosine and 2-deoxyadenosine. The polypeptide is Adenosine deaminase (Serratia proteamaculans (strain 568)).